Reading from the N-terminus, the 208-residue chain is Large ribosomal subunit protein uL4 (208 aa).

The interval 44–89 (RRQGTHKAKNRSEVRGGGRKPYRQKGTGHARQGSTRSPLMTGGGTI) is disordered. Residues 60-71 (GGRKPYRQKGTG) show a composition bias toward basic residues.

This sequence belongs to the universal ribosomal protein uL4 family. As to quaternary structure, part of the 50S ribosomal subunit.

One of the primary rRNA binding proteins, this protein initially binds near the 5'-end of the 23S rRNA. It is important during the early stages of 50S assembly. It makes multiple contacts with different domains of the 23S rRNA in the assembled 50S subunit and ribosome. In terms of biological role, forms part of the polypeptide exit tunnel. This Chlorobium phaeobacteroides (strain BS1) protein is Large ribosomal subunit protein uL4.